A 507-amino-acid polypeptide reads, in one-letter code: Maturase K (507 aa).

Belongs to the intron maturase 2 family. MatK subfamily.

Its subcellular location is the plastid. It localises to the chloroplast. Functionally, usually encoded in the trnK tRNA gene intron. Probably assists in splicing its own and other chloroplast group II introns. This is Maturase K from Kalmia buxifolia (Sand myrtle).